Reading from the N-terminus, the 275-residue chain is UPF0328 protein ECU05_0050 (275 aa).

This sequence belongs to the UPF0328 family.

In Encephalitozoon cuniculi (strain GB-M1) (Microsporidian parasite), this protein is UPF0328 protein ECU05_0050.